The primary structure comprises 415 residues: MTTVVREAFENHVKLVESRNSPGHVLASSEASFFVADLNDVVRKWAAWKEALPDVTPFFAVKSSYDRRLIQTLATCGAGFDCASTEEIELILSLGIGAERIIFTHPCKPVSSLGLCRKLGITLITFDNECELRKLHHHYPEAQTVLRVFADDPTNADPLGTKFGAARDDFDGLVRLVKELNMQLAGASFHAAPSVAVDAAAYVRGIRDTAEVFARARQVGLNPTVLDIGGGYTDSTFQQIAGAVRPAIAECFKSEVGEGRLRILAEPGTLFSCSPFYLAVKVVARRVNATAFGHEPATRLYINDGIYSNFMMRFIVNMTFSPAAVIREGVWHDQADHTMRGEACSLWGRSCDSNDCINRDCRLGPEVRVGDWLVFKDMGAYTTVCNTTFNGFTSSNHTIYLEPGTHPSRRSPVDL.

Position 62 is an N6-(pyridoxal phosphate)lysine (Lys-62). Pyridoxal 5'-phosphate-binding positions include Ser-194, Gly-231, and 266 to 269; that span reads EPGT. Residue 315-316 coordinates substrate; the sequence is IV. Cys-351 serves as the catalytic Proton donor; shared with dimeric partner. Residue Cys-351 is modified to S-nitrosocysteine. Asp-352 lines the substrate pocket. A pyridoxal 5'-phosphate-binding site is contributed by Tyr-381.

This sequence belongs to the Orn/Lys/Arg decarboxylase class-II family. As to quaternary structure, homodimer. Requires pyridoxal 5'-phosphate as cofactor.

It participates in alkaloid biosynthesis. Functionally, amino acid decarboxylase; part of the gene cluster that mediates the biosynthesis of loline alkaloids, potent insecticidal agents composed of a pyrrolizidine ring system and an uncommon ether bridge linking carbons 2 and 7. Lolines are structurally differentiated by the various modifications of the L-amino group and include norloline, loline, N-methylloline, N-acetylloline, N-acetylnorloline, and N-formylloline. The first committed step is the condensation of O-acetyl-L-homoserine (derived from L-aspartic acid) and L-proline, probably catalyzed by the gamma-type pyridoxal 5'-phosphate(PLP)-dependent enzyme lolC, to give the diamino diacid, NACPP. Ensuing cyclization, decarboxylation, and acetylation steps yield 1-exo-acetamidopyrrolizidine (AcAP). LolO is required for installation of the ether bridge upon the pathway intermediate, 1-exo-acetamidopyrrolizidine (AcAP). In sequential 2-oxoglutarate- and O(2)-consuming steps, lolO removes hydrogens from C2 and C7 of AcAP to form both carbon-oxygen bonds in N-acetylnorloline (NANL), the precursor to all other lolines. The enzymes lolD, lolE, lolF and lolT have also been proposed to be involved in the ether-bridge installation. Further processing of the exocyclic moiety of NANL by fungal N-acetamidase (LolN), methyltransferase (LolM), and cytochrome P450 (LolP) enzymes, with occasional involvement of a plant acetyltransferase, generates the other known lolines. LolN transforms NANL to norlonine which is monomethylated and dimethylated to respectively lonine and N-methyllonine (NML) by lolM. LolP catalyzes hydroxylation of the methyl group in N-methylloline (NML) and further oxygenation to N-formylloline (NFL). A plant acetyltransferase is responsible for the acetylation of loline to form N-acetylloline (NAL). LolA might interact with aspartate kinase to prevent feedback inhibition of its activity by these end products and thereby promote production of L-homoserine from L-aspartate. The polypeptide is Amino acid decarboxylase lolD2 (Epichloe uncinata (Endophyte fungus)).